The chain runs to 154 residues: uncharacterized protein (154 aa).

Residues 1–42 constitute a mitochondrion transit peptide; sequence MLRVIWKHSSRVTRSIELSNISTTNHTRSLRRLSWISPRRFY.

The protein resides in the mitochondrion. This is an uncharacterized protein from Saccharomyces cerevisiae (strain ATCC 204508 / S288c) (Baker's yeast).